The following is a 133-amino-acid chain: Serine/threonine-protein kinase RsbT (133 aa).

It carries out the reaction L-seryl-[protein] + ATP = O-phospho-L-seryl-[protein] + ADP + H(+). The catalysed reaction is L-threonyl-[protein] + ATP = O-phospho-L-threonyl-[protein] + ADP + H(+). Its function is as follows. Provides the crucial link between the upstream module (communication of environmental stress) and the downstream module (integration of the environmental signals with signals of energy stress) that compose the signal transduction pathway controlling the sigma-B factor. Phosphorylates and inactivates its specific antagonist protein RsbS thanks to its serine kinase activity. Upon phosphorylation of RsbS, RsbT is released to stimulate RsbU, a PP2C phosphatase, thereby initiating the signaling cascade that ultimately activates sigma-B. The activity of the RsbU phosphatase may be stimulated by a long-lived interaction with RsbT and the serine kinase function of RsbT is not required to directly modify RsbU. Also phosphorylates RsbR thanks to its threonine kinase activity, preventing it to phosphorylate RsbT. The sequence is that of Serine/threonine-protein kinase RsbT (rsbT) from Bacillus subtilis (strain 168).